The following is a 487-amino-acid chain: Aspartyl/glutamyl-tRNA(Asn/Gln) amidotransferase subunit B (487 aa).

This sequence belongs to the GatB/GatE family. GatB subfamily. As to quaternary structure, heterotrimer of A, B and C subunits.

The catalysed reaction is L-glutamyl-tRNA(Gln) + L-glutamine + ATP + H2O = L-glutaminyl-tRNA(Gln) + L-glutamate + ADP + phosphate + H(+). The enzyme catalyses L-aspartyl-tRNA(Asn) + L-glutamine + ATP + H2O = L-asparaginyl-tRNA(Asn) + L-glutamate + ADP + phosphate + 2 H(+). In terms of biological role, allows the formation of correctly charged Asn-tRNA(Asn) or Gln-tRNA(Gln) through the transamidation of misacylated Asp-tRNA(Asn) or Glu-tRNA(Gln) in organisms which lack either or both of asparaginyl-tRNA or glutaminyl-tRNA synthetases. The reaction takes place in the presence of glutamine and ATP through an activated phospho-Asp-tRNA(Asn) or phospho-Glu-tRNA(Gln). This Acidiphilium cryptum (strain JF-5) protein is Aspartyl/glutamyl-tRNA(Asn/Gln) amidotransferase subunit B.